Reading from the N-terminus, the 103-residue chain is MASYAIVKTGGKQYKVAVGDVVKVEKLDSEPGASVSLPVALVVDGANVTSKAEDLAKVAVTGEVLEHTKGPKIRIHKFKNKTGYHKRQGHRQQLTVLKVTGIK.

This sequence belongs to the bacterial ribosomal protein bL21 family. As to quaternary structure, part of the 50S ribosomal subunit. Contacts protein L20.

Its function is as follows. This protein binds to 23S rRNA in the presence of protein L20. The chain is Large ribosomal subunit protein bL21 from Mycobacterium sp. (strain JLS).